Reading from the N-terminus, the 201-residue chain is FMN reductase (NADH) RutF (201 aa).

The disordered stretch occupies residues 169–201; sequence APRSGAAPAEPARAARALGARPAEGPALALRSA.

Belongs to the non-flavoprotein flavin reductase family. RutF subfamily.

It carries out the reaction FMNH2 + NAD(+) = FMN + NADH + 2 H(+). Catalyzes the reduction of FMN to FMNH2 which is used to reduce pyrimidine by RutA via the Rut pathway. The polypeptide is FMN reductase (NADH) RutF (Methylorubrum extorquens (strain ATCC 14718 / DSM 1338 / JCM 2805 / NCIMB 9133 / AM1) (Methylobacterium extorquens)).